The following is a 292-amino-acid chain: MASITTTTNFFESIPRPTKTYRSASYDRISTRHGFNGTGKTVLITGGSSGIGLSIAKAFAGAGVARIAILSRSRATQLTAKAEIEAAYPSTSILLFEASVTDADRFASVLEELAGVHVLVLCAAAVHARVPLAELSGKDVQHVFDTNSVSTVNLARLYTATPGKDKTILHVSSAVAQMYAPLRSVYGASKAAAVQAMQHLAREHQGTGDRVRVFSFHPGAITTPASGAIYTPGAVQWDDADLPAHFSLWLAGPESDFLNGRYVWANWDVDELVALKERLACDGRFLTIGLVL.

Residues isoleucine 44 and arginine 156 each contribute to the NADP(+) site. Catalysis depends on proton donor residues serine 172 and tyrosine 186. NADP(+)-binding residues include tyrosine 186, lysine 190, isoleucine 221, and threonine 223. The Lowers pKa of active site Tyr role is filled by lysine 190.

This sequence belongs to the short-chain dehydrogenases/reductases (SDR) family.

It functions in the pathway secondary metabolite biosynthesis. Functionally, short chain dehydrogenase/reductase; part of the ergochrome gene cluster responsible for the typical purple-black color of the ergot sclerotia. The ergochrome gene cluster produces several ergot pigments including the yellow ergochrome secalonic acid and its derivatives, as well as the red anthraquinones endocrocin and clavorubin. The pathway begins with the synthesis of atrochrysone thioester by the polyketide synthase (PKS) CPUR_05437. The atrochrysone carboxyl ACP thioesterase CPUR_05436 then breaks the thioester bond and releases the atrochrysone carboxylic acid from CPUR_05437. The atrochrysone carboxylic acid is then converted to atrochrysone which is further transformed into emodin anthrone. The next step is performed by the anthrone oxygenase CPUR_05434 that catalyzes the oxidation of emodinanthrone to emodin. Emodin is further modified to yield monodictyphenone via several steps involving CPUR_05427, CPUR_05428, CPUR_05429 and CPUR_05430. The short chain dehydrogenase/reductase CPUR_05418 then catalyzes the C-5 ketoreduction to give the xanthone skeleton of the monomeric units. Ergochromes formation requires further dimerization steps of different xanthone units, probably catalyzed by the cytochrome P450 monooxygenase CPUR_05419. CPUR_05425, CPUR_05426 and CPUR_05431 are unique to Claviceps, thus it is likely that they are involved in further modification of xanthone units or in their dimerization. The yellow ergochromes and the red anthraquinone pigments endocrocin and clavorubin are products from the same PKS derived precursors and the latter are likely shunt products in the pathway of xanthone biosynthesis. It is proposed that atrochrysone carboxylic acid released from the PKS CPUR_05437 can also be converted to endocrocin anthrone which is further oxidized into endocrocin by CPUR_05435. Endocrocin could be then modified to clavorubin, possibly by CPUR_05423 and CPUR_05431. Clavorubin is the principal anthraquinone metabolite produced by the cluster with a much higher yield compared to endocrocin. The protein is Short chain dehydrogenase/reductase CPUR_05418 of Claviceps purpurea (strain 20.1) (Ergot fungus).